The following is a 352-amino-acid chain: MEFQKYRTMHFPRDVYIGHDVLNRVLDVVDQNSRTRDVIIVTGNTTYELAGKKIVEILASSPYEVHLSFAGEANYENLKKIEEETNDVNAGIIIGVGGGTKIDLAKKLAYDKNLPFISIPTSPSHDGIASPRASLRRNGISYSEEGAMPIGVIADTSVMIKAPYRYLAAGAADVISNISAVKDWKLAHRLRGEEFSSSAAAMSEYSAQEVISQVGEIRKYDESSVWLVTKNILASGTAMAIAGNSRPGSGSEHLFAHALEAAGVNNMLHGEMCAMGTIVSLYLHDDNWQKIRDVFESLGVSVKARDYGLKEEVVIEALRRAHAIRPERYTILGESDMSYDAAVKALELTGII.

NAD(+) is bound by residues 99–103 and 121–124; these read GTKID and TSPS. Residue aspartate 126 participates in substrate binding. Serine 130 lines the NAD(+) pocket. Aspartate 173 is a binding site for substrate. Positions 173 and 253 each coordinate Zn(2+). Residue histidine 257 participates in substrate binding. A Zn(2+)-binding site is contributed by histidine 269.

It belongs to the glycerol-1-phosphate dehydrogenase family. Zn(2+) is required as a cofactor.

The protein localises to the cytoplasm. It carries out the reaction sn-glycerol 1-phosphate + NAD(+) = dihydroxyacetone phosphate + NADH + H(+). The enzyme catalyses sn-glycerol 1-phosphate + NADP(+) = dihydroxyacetone phosphate + NADPH + H(+). It functions in the pathway membrane lipid metabolism; glycerophospholipid metabolism. Functionally, catalyzes the NAD(P)H-dependent reduction of dihydroxyacetonephosphate (DHAP or glycerone phosphate) to glycerol 1-phosphate (G1P). The G1P thus generated is used as the glycerophosphate backbone of phospholipids in the cellular membranes of Archaea. In Thermoplasma volcanium (strain ATCC 51530 / DSM 4299 / JCM 9571 / NBRC 15438 / GSS1), this protein is Glycerol-1-phosphate dehydrogenase [NAD(P)+].